Here is a 216-residue protein sequence, read N- to C-terminus: MNLVLMGLPGAGKGTQAEKIVETYGIPHISTGDMFRAAIKEGTPLGLQAKEYMDRGDLVPDEVTIGIVRERLSKDDCQKGFLLDGFPRTVAQAEALENILAELNRSIDYVIHIQVDKDILMERLTGRRICKNCGATYHLVFNPPAKSGVCDKCGGELYQRADDNEETVANRLEVNIKQTQPLLEFYEKKGYLRHINGQQDIEKVFADIRELLGGLQ.

10 to 15 (GAGKGT) contributes to the ATP binding site. The tract at residues 30–59 (STGDMFRAAIKEGTPLGLQAKEYMDRGDLV) is NMP. AMP is bound by residues Thr31, Arg36, 57–59 (DLV), 85–88 (GFPR), and Gln92. An LID region spans residues 126 to 163 (GRRICKNCGATYHLVFNPPAKSGVCDKCGGELYQRADD). Arg127 is an ATP binding site. Positions 130 and 133 each coordinate Zn(2+). An ATP-binding site is contributed by 136 to 137 (TY). Zn(2+)-binding residues include Cys150 and Cys153. Arg160 and Arg171 together coordinate AMP. Gln199 contacts ATP.

Belongs to the adenylate kinase family. In terms of assembly, monomer.

The protein localises to the cytoplasm. It carries out the reaction AMP + ATP = 2 ADP. It functions in the pathway purine metabolism; AMP biosynthesis via salvage pathway; AMP from ADP: step 1/1. In terms of biological role, catalyzes the reversible transfer of the terminal phosphate group between ATP and AMP. Plays an important role in cellular energy homeostasis and in adenine nucleotide metabolism. In Geobacillus sp. (strain WCH70), this protein is Adenylate kinase.